The primary structure comprises 341 residues: N-acetyl-gamma-glutamyl-phosphate reductase (341 aa).

Residue Cys-148 is part of the active site.

Belongs to the NAGSA dehydrogenase family. Type 1 subfamily.

Its subcellular location is the cytoplasm. The catalysed reaction is N-acetyl-L-glutamate 5-semialdehyde + phosphate + NADP(+) = N-acetyl-L-glutamyl 5-phosphate + NADPH + H(+). It functions in the pathway amino-acid biosynthesis; L-arginine biosynthesis; N(2)-acetyl-L-ornithine from L-glutamate: step 3/4. Its function is as follows. Catalyzes the NADPH-dependent reduction of N-acetyl-5-glutamyl phosphate to yield N-acetyl-L-glutamate 5-semialdehyde. This chain is N-acetyl-gamma-glutamyl-phosphate reductase, found in Pseudothermotoga lettingae (strain ATCC BAA-301 / DSM 14385 / NBRC 107922 / TMO) (Thermotoga lettingae).